Consider the following 231-residue polypeptide: Glutathione-specific gamma-glutamylcyclotransferase (231 aa).

49 to 54 (IFGYGS) is a substrate binding site. E127 acts as the Proton acceptor in catalysis.

Belongs to the gamma-glutamylcyclotransferase family. ChaC subfamily.

It catalyses the reaction glutathione = L-cysteinylglycine + 5-oxo-L-proline. In terms of biological role, catalyzes the cleavage of glutathione into 5-oxo-L-proline and a Cys-Gly dipeptide. Acts specifically on glutathione, but not on other gamma-glutamyl peptides. In Escherichia coli (strain K12), this protein is Glutathione-specific gamma-glutamylcyclotransferase.